The chain runs to 75 residues: MLASRFGRFLMAWHHETWAIVIVNSGLVGTSNGQFCVFTSENRAWEECLKLREKNPDVELVVKKTKLPLPWKTYE.

This is an uncharacterized protein from Escherichia coli (Bacteriophage T4).